The sequence spans 180 residues: Acireductone dioxygenase (180 aa).

4 residues coordinate Fe(2+): His-97, His-99, Glu-103, and His-141. Positions 97, 99, 103, and 141 each coordinate Ni(2+).

This sequence belongs to the acireductone dioxygenase (ARD) family. As to quaternary structure, monomer. Fe(2+) serves as cofactor. Ni(2+) is required as a cofactor.

The enzyme catalyses 1,2-dihydroxy-5-(methylsulfanyl)pent-1-en-3-one + O2 = 3-(methylsulfanyl)propanoate + CO + formate + 2 H(+). The catalysed reaction is 1,2-dihydroxy-5-(methylsulfanyl)pent-1-en-3-one + O2 = 4-methylsulfanyl-2-oxobutanoate + formate + 2 H(+). Its pathway is amino-acid biosynthesis; L-methionine biosynthesis via salvage pathway; L-methionine from S-methyl-5-thio-alpha-D-ribose 1-phosphate: step 5/6. In terms of biological role, catalyzes 2 different reactions between oxygen and the acireductone 1,2-dihydroxy-3-keto-5-methylthiopentene (DHK-MTPene) depending upon the metal bound in the active site. Fe-containing acireductone dioxygenase (Fe-ARD) produces formate and 2-keto-4-methylthiobutyrate (KMTB), the alpha-ketoacid precursor of methionine in the methionine recycle pathway. Ni-containing acireductone dioxygenase (Ni-ARD) produces methylthiopropionate, carbon monoxide and formate, and does not lie on the methionine recycle pathway. The polypeptide is Acireductone dioxygenase (Yersinia pseudotuberculosis serotype O:3 (strain YPIII)).